A 315-amino-acid chain; its full sequence is Methionyl-tRNA formyltransferase (315 aa).

Ser-110–Pro-113 is a (6S)-5,6,7,8-tetrahydrofolate binding site.

Belongs to the Fmt family.

The enzyme catalyses L-methionyl-tRNA(fMet) + (6R)-10-formyltetrahydrofolate = N-formyl-L-methionyl-tRNA(fMet) + (6S)-5,6,7,8-tetrahydrofolate + H(+). Attaches a formyl group to the free amino group of methionyl-tRNA(fMet). The formyl group appears to play a dual role in the initiator identity of N-formylmethionyl-tRNA by promoting its recognition by IF2 and preventing the misappropriation of this tRNA by the elongation apparatus. This chain is Methionyl-tRNA formyltransferase, found in Cutibacterium acnes (strain DSM 16379 / KPA171202) (Propionibacterium acnes).